A 317-amino-acid chain; its full sequence is Lipoyl synthase (317 aa).

The disordered stretch occupies residues 1-21 (MVTVIDTLARPRHPEKANRPE). Residues 12–21 (RHPEKANRPE) show a composition bias toward basic and acidic residues. 7 residues coordinate [4Fe-4S] cluster: Cys-57, Cys-62, Cys-68, Cys-83, Cys-87, Cys-90, and Ser-296. The 217-residue stretch at 69–285 (WEKKHATFMI…ETVAYAKGFL (217 aa)) folds into the Radical SAM core domain.

This sequence belongs to the radical SAM superfamily. Lipoyl synthase family. [4Fe-4S] cluster is required as a cofactor.

It is found in the cytoplasm. The catalysed reaction is [[Fe-S] cluster scaffold protein carrying a second [4Fe-4S](2+) cluster] + N(6)-octanoyl-L-lysyl-[protein] + 2 oxidized [2Fe-2S]-[ferredoxin] + 2 S-adenosyl-L-methionine + 4 H(+) = [[Fe-S] cluster scaffold protein] + N(6)-[(R)-dihydrolipoyl]-L-lysyl-[protein] + 4 Fe(3+) + 2 hydrogen sulfide + 2 5'-deoxyadenosine + 2 L-methionine + 2 reduced [2Fe-2S]-[ferredoxin]. It participates in protein modification; protein lipoylation via endogenous pathway; protein N(6)-(lipoyl)lysine from octanoyl-[acyl-carrier-protein]: step 2/2. In terms of biological role, catalyzes the radical-mediated insertion of two sulfur atoms into the C-6 and C-8 positions of the octanoyl moiety bound to the lipoyl domains of lipoate-dependent enzymes, thereby converting the octanoylated domains into lipoylated derivatives. This Xanthobacter autotrophicus (strain ATCC BAA-1158 / Py2) protein is Lipoyl synthase.